A 354-amino-acid chain; its full sequence is S-adenosylmethionine-dependent nucleotide dehydratase RSAD2 (354 aa).

Residues 62–282 (AMTPTSVNYH…LDRHSSISCL (221 aa)) form the Radical SAM core domain. [4Fe-4S] cluster-binding residues include Cys-76, Cys-80, and Cys-83.

Belongs to the radical SAM superfamily. RSAD2 family. [4Fe-4S] cluster is required as a cofactor. Constitutively expressed in spleen, head kidney and trunk kidney. Following viral infection, detected in most organs including liver, gill, intestine, heart, muscle and brain.

Its subcellular location is the endoplasmic reticulum membrane. Functionally, interferon-inducible iron-sulfur (4FE-4S) cluster-binding antiviral protein which plays a major role in the cell antiviral state induced by type I and type II interferon. The chain is S-adenosylmethionine-dependent nucleotide dehydratase RSAD2 from Siniperca chuatsi (Mandarin fish).